Here is a 280-residue protein sequence, read N- to C-terminus: MGLVKPKKFLGQHFLKDLSIAKDIADTVDVCPDLPILEVGPGMGVLTQFIMQKNRPVKVVELDYESVAYLRENFPALEDNIIEDDFLKLNLEKLFDGKPFVLTGNYPYNISSQIFFKMLDYKDLIPCCTGMIQKEVAERIAAGPGSKTYGILSILIQAWYKVEYLFTVHEHVFNPPPKVKSAVIRMTRNETTELGCNEKLFKLIVKTTFNQRRKTLRNSISSILDKENPLSADPIFNKRPEQLSVQEFIELTNQVEAALKNKTDIVYSNDIARKGTNKKE.

The S-adenosyl-L-methionine site is built by H13, L15, G40, E61, D85, and N105.

Belongs to the class I-like SAM-binding methyltransferase superfamily. rRNA adenine N(6)-methyltransferase family. RsmA subfamily.

It is found in the cytoplasm. The catalysed reaction is adenosine(1518)/adenosine(1519) in 16S rRNA + 4 S-adenosyl-L-methionine = N(6)-dimethyladenosine(1518)/N(6)-dimethyladenosine(1519) in 16S rRNA + 4 S-adenosyl-L-homocysteine + 4 H(+). Functionally, specifically dimethylates two adjacent adenosines (A1518 and A1519) in the loop of a conserved hairpin near the 3'-end of 16S rRNA in the 30S particle. May play a critical role in biogenesis of 30S subunits. The protein is Ribosomal RNA small subunit methyltransferase A of Phocaeicola vulgatus (strain ATCC 8482 / DSM 1447 / JCM 5826 / CCUG 4940 / NBRC 14291 / NCTC 11154) (Bacteroides vulgatus).